Consider the following 736-residue polypeptide: Catalase-peroxidase (736 aa).

A disordered region spans residues 1–30 (MGGNVMTDDKMNSVTSGANKQETGRDMSNR). Polar residues predominate over residues 12-21 (NSVTSGANKQ). The segment at residues 101 to 224 (WHSAGTYRAG…LAAVQMGLIY (124 aa)) is a cross-link (tryptophyl-tyrosyl-methioninium (Trp-Tyr) (with M-250)). The active-site Proton acceptor is His-102. The segment at residues 224 to 250 (YVNPEGPNGNPDPIAAAKDIREVFARM) is a cross-link (tryptophyl-tyrosyl-methioninium (Tyr-Met) (with W-101)). His-265 contacts heme b. The disordered stretch occupies residues 351–373 (KGGAGAGTIPDAHDPSKRHAPSM).

This sequence belongs to the peroxidase family. Peroxidase/catalase subfamily. As to quaternary structure, homodimer or homotetramer. The cofactor is heme b. In terms of processing, formation of the three residue Trp-Tyr-Met cross-link is important for the catalase, but not the peroxidase activity of the enzyme.

The catalysed reaction is H2O2 + AH2 = A + 2 H2O. The enzyme catalyses 2 H2O2 = O2 + 2 H2O. Its function is as follows. Bifunctional enzyme with both catalase and broad-spectrum peroxidase activity. The protein is Catalase-peroxidase of Methanosarcina acetivorans (strain ATCC 35395 / DSM 2834 / JCM 12185 / C2A).